The chain runs to 105 residues: U-scoloptoxin(16)-Sm4a (105 aa).

The signal sequence occupies residues methionine 1–glycine 22.

This sequence belongs to the scoloptoxin-16 family. Contains 4 disulfide bonds. As to expression, expressed by the venom gland.

It is found in the secreted. This chain is U-scoloptoxin(16)-Sm4a, found in Scolopendra morsitans (Tanzanian blue ringleg centipede).